The sequence spans 131 residues: Large ribosomal subunit protein bL17 (131 aa).

Belongs to the bacterial ribosomal protein bL17 family. Part of the 50S ribosomal subunit. Contacts protein L32.

The chain is Large ribosomal subunit protein bL17 from Bordetella petrii (strain ATCC BAA-461 / DSM 12804 / CCUG 43448).